The primary structure comprises 699 residues: Cyclic AMP-dependent transcription factor ATF-6 beta (699 aa).

Residue Ala2 is modified to N-acetylalanine. Over 2 to 393 (AELMLLSEIA…GLKLGSGNRK (392 aa)) the chain is Cytoplasmic. Disordered stretches follow at residues 59–114 (SLDV…QVPG), 218–246 (VQISMGPSPDSSSGKAPATRKPPLQPKPV), and 290–313 (EGPAPAAPRPERKSIVPAPMPGNS). Positions 68–78 (PPEPPWDPLPI) are enriched in pro residues. The segment covering 86-109 (SEPSSPCSSSSLSSESSHLSTEPP) has biased composition (low complexity). Residues 322–385 (LLKRQQRMIK…EALLAENSGL (64 aa)) form the bZIP domain. The tract at residues 324–344 (KRQQRMIKNRESACQSRRKKK) is basic motif. The segment at 347–354 (LQGLEARL) is leucine-zipper. A helical; Signal-anchor for type II membrane protein transmembrane segment spans residues 394–414 (VVCIMVFLLFIAFNFGPVSIS). Residues 415 to 699 (EPPPAPMSPR…ASQPLYLNHP (285 aa)) are Lumenal-facing. Residues 417–474 (PPAPMSPRMSREEPRPQRHLLGFSEPGPAHGMEPLREAAQSPGEQQPSSAGRPSFRNL) are disordered. The span at 458–467 (PGEQQPSSAG) shows a compositional bias: polar residues. Asn473 and Asn502 each carry an N-linked (GlcNAc...) asparagine glycan. Positions 519–529 (RHQRGRRKIPH) are enriched in basic residues. The tract at residues 519–563 (RHQRGRRKIPHRAQERQKSQLRKKSPPVKPVPTQPPGPPERDPVG) is disordered. Residues 545-556 (PVKPVPTQPPGP) are compositionally biased toward pro residues. N-linked (GlcNAc...) asparagine glycosylation is found at Asn607, Asn624, and Asn673. A disordered region spans residues 657–699 (STVPPSLRKQPSPSPGNTTGGPLPGSAASPAHQASQPLYLNHP). The span at 680–693 (PGSAASPAHQASQP) shows a compositional bias: low complexity.

The protein belongs to the bZIP family. ATF subfamily. Homodimer and heterodimer with ATF6-alpha. The dimer interacts with the nuclear transcription factor Y (NF-Y) trimer through direct binding to NF-Y subunit C (NF-YC). In terms of processing, N-glycosylated. Post-translationally, during unfolded protein response, a fragment of approximately 60 kDa containing the cytoplasmic transcription factor domain is released by proteolysis. The cleavage is probably performed sequentially by site-1 (MBTPS1, S1P) and site-2 (MBTPS2, S2P) proteases.

The protein resides in the endoplasmic reticulum membrane. The protein localises to the nucleus. Its function is as follows. Precursor of the transcription factor form (Processed cyclic AMP-dependent transcription factor ATF-6 beta), which is embedded in the endoplasmic reticulum membrane. Endoplasmic reticulum stress promotes processing of this form, releasing the transcription factor form that translocates into the nucleus, where it activates transcription of genes involved in the unfolded protein response (UPR). In terms of biological role, transcription factor that acts in the unfolded protein response (UPR) pathway by activating UPR target genes induced during ER stress. Binds DNA on the 5'-CCAC[GA]-3' half of the ER stress response element (ERSE) (5'-CCAATN(9)CCAC[GA]-3') when NF-Y is bound to ERSE. This is Cyclic AMP-dependent transcription factor ATF-6 beta (Atf6b) from Mus musculus (Mouse).